A 339-amino-acid polypeptide reads, in one-letter code: Dihydroorotate dehydrogenase (quinone) (339 aa).

FMN is bound by residues 62-66 (AGMDK) and threonine 86. Lysine 66 serves as a coordination point for substrate. 111–115 (NRMGF) is a substrate binding site. The FMN site is built by asparagine 139 and asparagine 172. Asparagine 172 contacts substrate. Serine 175 serves as the catalytic Nucleophile. Asparagine 177 lines the substrate pocket. FMN contacts are provided by lysine 217 and threonine 245. Residue 246 to 247 (NT) participates in substrate binding. FMN-binding positions include glycine 268, glycine 297, and 318–319 (YS).

It belongs to the dihydroorotate dehydrogenase family. Type 2 subfamily. Monomer. The cofactor is FMN.

Its subcellular location is the cell membrane. It carries out the reaction (S)-dihydroorotate + a quinone = orotate + a quinol. It functions in the pathway pyrimidine metabolism; UMP biosynthesis via de novo pathway; orotate from (S)-dihydroorotate (quinone route): step 1/1. Catalyzes the conversion of dihydroorotate to orotate with quinone as electron acceptor. The protein is Dihydroorotate dehydrogenase (quinone) of Shewanella sp. (strain ANA-3).